A 120-amino-acid chain; its full sequence is Crustacean hyperglycemic hormones 4 (120 aa).

Residues 1–26 (MVALNTLSAVSAALLVLAASPSPASA) form the signal peptide. Cystine bridges form between cysteine 53–cysteine 89, cysteine 69–cysteine 85, and cysteine 72–cysteine 98. Valine 118 carries the valine amide modification.

Belongs to the arthropod CHH/MIH/GIH/VIH hormone family.

It is found in the secreted. Its function is as follows. Hormone found in the sinus gland of isopods and decapods which controls the blood sugar level. Has a secretagogue action over the amylase released from the midgut gland. May act as a stress hormone and may be involved in the control of molting and reproduction. The sequence is that of Crustacean hyperglycemic hormones 4 (CHH4) from Penaeus monodon (Giant tiger prawn).